We begin with the raw amino-acid sequence, 317 residues long: Transaldolase 2 (317 aa).

Residue Lys-132 is the Schiff-base intermediate with substrate of the active site.

It belongs to the transaldolase family. Type 1 subfamily. In terms of assembly, homodimer.

The protein localises to the cytoplasm. The catalysed reaction is D-sedoheptulose 7-phosphate + D-glyceraldehyde 3-phosphate = D-erythrose 4-phosphate + beta-D-fructose 6-phosphate. Its pathway is carbohydrate degradation; pentose phosphate pathway; D-glyceraldehyde 3-phosphate and beta-D-fructose 6-phosphate from D-ribose 5-phosphate and D-xylulose 5-phosphate (non-oxidative stage): step 2/3. Its function is as follows. Transaldolase is important for the balance of metabolites in the pentose-phosphate pathway. This Pectobacterium atrosepticum (strain SCRI 1043 / ATCC BAA-672) (Erwinia carotovora subsp. atroseptica) protein is Transaldolase 2.